Here is a 326-residue protein sequence, read N- to C-terminus: Phenylalanine--tRNA ligase alpha subunit (326 aa).

Mg(2+) is bound at residue E251.

Belongs to the class-II aminoacyl-tRNA synthetase family. Phe-tRNA synthetase alpha subunit type 1 subfamily. Tetramer of two alpha and two beta subunits. It depends on Mg(2+) as a cofactor.

It is found in the cytoplasm. It catalyses the reaction tRNA(Phe) + L-phenylalanine + ATP = L-phenylalanyl-tRNA(Phe) + AMP + diphosphate + H(+). The sequence is that of Phenylalanine--tRNA ligase alpha subunit from Pseudoalteromonas atlantica (strain T6c / ATCC BAA-1087).